Consider the following 261-residue polypeptide: Follistatin-related protein 3 (261 aa).

Residues 1–26 form the signal peptide; the sequence is MRPRAPGPLWPLPWGALAWAVGFVGS. Residues 36–107 form the TB domain; it reads GVCWLQQGRE…SCEGVECGPG (72 aa). 8 cysteine pairs are disulfide-bonded: C38/C61, C48/C92, C62/C95, C99/C110, C104/C119, C121/C153, C125/C146, and C135/C167. N-linked (GlcNAc...) asparagine glycosylation is present at N73. The Follistatin-like 1 domain occupies 99–119; it reads CEGVECGPGKACRMLGGRPRC. Kazal-like domains are found at residues 113–169 and 189–245; these read LGGR…RCRK and SAHC…SCAG. Positions 170–193 constitute a Follistatin-like 2 domain; it reads SCAHVVCLRPQSCVVDQTGSAHCV. Disulfide bonds link C195–C229, C200–C222, and C211–C243. N-linked (GlcNAc...) asparagine glycosylation is present at N215. The disordered stretch occupies residues 242–261; the sequence is SCAGTPEPLDPESEEEENFV. The span at 250–261 shows a compositional bias: acidic residues; the sequence is LDPESEEEENFV.

As to quaternary structure, interacts with INHBA and INHBB. Interacts with FN1. Interacts with ADAM12. Interacts with MLLT10; the interaction enhances MLLT10 in vitro transcriptional activity and self-association. Interacts with MSTN.

The protein resides in the secreted. Its subcellular location is the nucleus. Functionally, the secreted form is a binding and antagonizing protein for members of the TGF-beta family, such as activin, BMP2 and MSTN. Inhibits activin A-, activin B-, BMP2- and MSDT-induced cellular signaling; more effective on activin A than on activin B. Involved in bone formation; inhibits osteoclast differentiation. Involved in hematopoiesis; involved in differentiation of hemopoietic progenitor cells, increases hematopoietic cell adhesion to fibronectin and seems to contribute to the adhesion of hematopoietic precursor cells to the bone marrow stroma. The nuclear form is probably involved in transcriptional regulation via interaction with MLLT10. The polypeptide is Follistatin-related protein 3 (FSTL3) (Bos taurus (Bovine)).